A 71-amino-acid chain; its full sequence is Small ribosomal subunit protein bS21 (71 aa).

Belongs to the bacterial ribosomal protein bS21 family.

In Psychromonas ingrahamii (strain DSM 17664 / CCUG 51855 / 37), this protein is Small ribosomal subunit protein bS21.